A 113-amino-acid chain; its full sequence is Large ribosomal subunit protein bL19 (113 aa).

This sequence belongs to the bacterial ribosomal protein bL19 family.

Its function is as follows. This protein is located at the 30S-50S ribosomal subunit interface and may play a role in the structure and function of the aminoacyl-tRNA binding site. In Corynebacterium diphtheriae (strain ATCC 700971 / NCTC 13129 / Biotype gravis), this protein is Large ribosomal subunit protein bL19.